The following is a 904-amino-acid chain: Protein abrupt (904 aa).

Polar residues predominate over residues 1-15; sequence MTESTQLQTAENNNA. 2 disordered regions span residues 1-30 and 53-72; these read MTESTQLQTAENNNAGVVKMEPPPPATSSV and GSALSPATPPPSLNLSHQQQ. Residues 103-168 form the BTB domain; it reads VDVTLACDER…MYNGEVNVSH (66 aa). The segment covering 204–238 has biased composition (low complexity); the sequence is SHNSSNNNNNNSSSNNSLSNNNNNNNNNAESSNHN. 4 disordered regions span residues 204–287, 349–390, 411–438, and 451–501; these read SHNS…LNSP, ASSA…PPPQ, LLDREFPVAGQHPLTRNRSGRDTSKDRE, and ALEN…NQRS. Over residues 239 to 253 the composition is skewed to polar residues; sequence KISSYLSPNQTSAAC. The span at 254–286 shows a compositional bias: low complexity; that stretch reads NNSSNSNSNNHSSSHNNSSSNNISGSLNSSLNS. The span at 429–438 shows a compositional bias: basic and acidic residues; sequence SGRDTSKDRE. The span at 452 to 461 shows a compositional bias: polar residues; it reads LENSNGQQAN. Ser-474 carries the post-translational modification Phosphoserine. The segment covering 481 to 500 has biased composition (basic and acidic residues); it reads PSDRGDGQHDGTLDGIDNQR. C2H2-type zinc fingers lie at residues 544-567 and 573-596; these read RPCPKCGKIYRSAHTLRTHLEDKH and YRCVLCGTVAKSRNSLHSHMSRQH. Disordered regions lie at residues 633–696 and 832–904; these read ELRA…GGSS and AAGN…VHNT. Over residues 642-655 the composition is skewed to gly residues; it reads GGSGSSGGGGGGGS. Positions 671 to 682 are enriched in acidic residues; that stretch reads DDAEDSDDDPED. Ser-837, Ser-846, and Ser-868 each carry phosphoserine. A compositionally biased stretch (basic and acidic residues) spans 851-868; that stretch reads MGHDEMAENDGDMRREGS. Residues 876–886 show a composition bias toward polar residues; the sequence is DNNQSGSNHEV. 2 positions are modified to phosphoserine: Ser-889 and Ser-896.

Expressed in CNS midline cells during embryonic stages 9-13. Expression also seen in cells of the stomagastric nervous system. Segmentally repeated stripes of ectodermal expression appear at stage 11 that become uniform by stage 12 and throughout embryogenesis. Expressed at variable levels in somatic muscles from stage 16 and in all imaginal disks during larval development. Expression is seen in da neurons that grow in two-dimensional dendrites underneath the epidermis during late embryonic, larval, and pupal stages.

It localises to the nucleus. Expression is vital for development; may be involved in transcriptional regulation. In embryos, muscle specific expression is required for segmental nerve b (SNb) motoneuron target recognition within ventral longitudinal muscles. Has a role in establishing and maintaining embryonic muscle attachments, adult sensory cell formation (macrochaetae) and morphogenesis of adult appendages (legs, antenna aristae and male external genitalia). Has a role in the morphogenesis of the class I dendritic neurons: selective expression of ab in class I da neurons plays a pivotal role in forming dendritic arbors, which are characteristic of the class I cells. The development of more complex arbors of class II-IV neurons depends on the absence of ab. The chain is Protein abrupt (ab) from Drosophila melanogaster (Fruit fly).